We begin with the raw amino-acid sequence, 256 residues long: tRNA pseudouridine synthase A (256 aa).

Catalysis depends on Asp55, which acts as the Nucleophile. Tyr113 is a binding site for substrate.

This sequence belongs to the tRNA pseudouridine synthase TruA family. In terms of assembly, homodimer.

It carries out the reaction uridine(38/39/40) in tRNA = pseudouridine(38/39/40) in tRNA. Functionally, formation of pseudouridine at positions 38, 39 and 40 in the anticodon stem and loop of transfer RNAs. The sequence is that of tRNA pseudouridine synthase A from Limosilactobacillus reuteri (strain DSM 20016) (Lactobacillus reuteri).